We begin with the raw amino-acid sequence, 299 residues long: Very long chain fatty acid elongase 5 (299 aa).

Met1 carries the N-acetylmethionine modification. 6 consecutive transmembrane segments (helical) span residues 26-46 (WFLL…LLIV), 64-84 (ILVV…CELV), 112-132 (VLRW…FFIL), 150-170 (MLNI…YFGA), 205-225 (GQLL…IWPC), and 226-246 (TFPL…IALF). The segment at 275 to 299 (AAVNGHTNSFSPLENNVKPRKLRKD) is disordered. Residues 279–288 (GHTNSFSPLE) are compositionally biased toward polar residues. At Ser285 the chain carries Phosphoserine.

Belongs to the ELO family. ELOVL5 subfamily. As to quaternary structure, interacts with TECR.

The protein resides in the endoplasmic reticulum membrane. Its subcellular location is the cell projection. The protein localises to the dendrite. The enzyme catalyses a very-long-chain acyl-CoA + malonyl-CoA + H(+) = a very-long-chain 3-oxoacyl-CoA + CO2 + CoA. It catalyses the reaction (6Z,9Z,12Z)-octadecatrienoyl-CoA + malonyl-CoA + H(+) = (8Z,11Z,14Z)-3-oxoeicosatrienoyl-CoA + CO2 + CoA. It carries out the reaction (9Z,12Z,15Z)-octadecatrienoyl-CoA + malonyl-CoA + H(+) = (11Z,14Z,17Z)-3-oxoeicosatrienoyl-CoA + CO2 + CoA. The catalysed reaction is (9Z)-hexadecenoyl-CoA + malonyl-CoA + H(+) = 3-oxo-(11Z)-octadecenoyl-CoA + CO2 + CoA. The enzyme catalyses (9Z)-octadecenoyl-CoA + malonyl-CoA + H(+) = 3-oxo-(11Z)-eicosenoyl-CoA + CO2 + CoA. It catalyses the reaction (11Z)-octadecenoyl-CoA + malonyl-CoA + H(+) = 3-oxo-(13Z)-eicosenoyl-CoA + CO2 + CoA. It carries out the reaction (9Z,12Z)-octadecadienoyl-CoA + malonyl-CoA + H(+) = (11Z,14Z)-3-oxoicosa-11,14-dienoyl-CoA + CO2 + CoA. The catalysed reaction is (6Z,9Z,12Z,15Z)-octadecatetraenoyl-CoA + malonyl-CoA + H(+) = (8Z,11Z,14Z,17Z)-3-oxoicosatetraenoyl-CoA + CO2 + CoA. The enzyme catalyses (5Z,8Z,11Z,14Z)-eicosatetraenoyl-CoA + malonyl-CoA + H(+) = (7Z,10Z,13Z,16Z)-3-oxodocosatetraenoyl-CoA + CO2 + CoA. It catalyses the reaction (5Z,8Z,11Z,14Z,17Z)-eicosapentaenoyl-CoA + malonyl-CoA + H(+) = 3-oxo-(7Z,10Z,13Z,16Z,19Z)-docosapentaenoyl-CoA + CO2 + CoA. It participates in lipid metabolism; polyunsaturated fatty acid biosynthesis. Its function is as follows. Catalyzes the first and rate-limiting reaction of the four reactions that constitute the long-chain fatty acids elongation cycle. This endoplasmic reticulum-bound enzymatic process allows the addition of 2 carbons to the chain of long- and very long-chain fatty acids (VLCFAs) per cycle. Condensing enzyme that acts specifically toward polyunsaturated acyl-CoA with the higher activity toward C18:3(n-6) acyl-CoA. May participate in the production of monounsaturated and of polyunsaturated VLCFAs of different chain lengths that are involved in multiple biological processes as precursors of membrane lipids and lipid mediators. In conditions where the essential linoleic and alpha linoleic fatty acids are lacking it is also involved in the synthesis of Mead acid from oleic acid. This is Very long chain fatty acid elongase 5 from Macaca fascicularis (Crab-eating macaque).